A 78-amino-acid polypeptide reads, in one-letter code: MRLILWLPVLVVVLLMVLEGPAPAQGAPDIAGTFRNIPNSLKEFGNNLKDAFENIPEATRKLMTSFAEGLKNFRIPMV.

A signal peptide spans 1 to 26; that stretch reads MRLILWLPVLVVVLLMVLEGPAPAQG.

This sequence belongs to the apolipoprotein C1 family.

Its subcellular location is the secreted. Functionally, inhibitor of lipoprotein binding to the low density lipoprotein (LDL) receptor, LDL receptor-related protein, and very low density lipoprotein (VLDL) receptor. Associates with high density lipoproteins (HDL) and the triacylglycerol-rich lipoproteins in the plasma and makes up about 10% of the protein of the VLDL and 2% of that of HDL. Appears to interfere directly with fatty acid uptake and is also the major plasma inhibitor of cholesteryl ester transfer protein (CETP). Binds free fatty acids and reduces their intracellular esterification. Modulates the interaction of APOE with beta-migrating VLDL and inhibits binding of beta-VLDL to the LDL receptor-related protein. The sequence is that of Apolipoprotein C-I (APOC1) from Lynx pardinus (Iberian lynx).